A 208-amino-acid polypeptide reads, in one-letter code: NAD(P)H dehydrogenase (quinone) (208 aa).

The Flavodoxin-like domain occupies 4-192; sequence VLVLYYSSYG…DGARFQGRHV (189 aa). FMN contacts are provided by residues 10–15 and 78–80; these read SSYGHV and TRF. Residue Tyr12 coordinates NAD(+). Residue Trp98 participates in substrate binding. Residues 113-119 and His134 each bind FMN; that span reads STGSQHG. The interval 161–183 is disordered; the sequence is YGASTLADDGDGGDRQPSANELD.

This sequence belongs to the WrbA family. FMN serves as cofactor.

It carries out the reaction a quinone + NADH + H(+) = a quinol + NAD(+). The catalysed reaction is a quinone + NADPH + H(+) = a quinol + NADP(+). The chain is NAD(P)H dehydrogenase (quinone) from Paracoccus denitrificans (strain Pd 1222).